A 270-amino-acid chain; its full sequence is Small ribosomal subunit protein uS2 (270 aa).

Belongs to the universal ribosomal protein uS2 family. Component of the small ribosomal subunit. Mature ribosomes consist of a small (40S) and a large (60S) subunit. The 40S subunit contains about 33 different proteins and 1 molecule of RNA (18S). The 60S subunit contains about 49 different proteins and 3 molecules of RNA (28S, 5.8S and 5S). Interacts with oho23B/rpS21.

Its subcellular location is the cytoplasm. It localises to the nucleus. Functionally, required for the assembly and/or stability of the 40S ribosomal subunit. Required for the processing of the 20S rRNA-precursor to mature 18S rRNA in a late step of the maturation of 40S ribosomal subunits. Required during oogenesis and imaginal development. This chain is Small ribosomal subunit protein uS2, found in Drosophila persimilis (Fruit fly).